A 323-amino-acid chain; its full sequence is tRNA U34 carboxymethyltransferase (323 aa).

Residues Lys-90, Trp-104, Lys-109, Gly-129, 182-183 (IE), Met-197, Tyr-201, and Arg-316 each bind carboxy-S-adenosyl-L-methionine.

It belongs to the class I-like SAM-binding methyltransferase superfamily. CmoB family. In terms of assembly, homotetramer.

It carries out the reaction carboxy-S-adenosyl-L-methionine + 5-hydroxyuridine(34) in tRNA = 5-carboxymethoxyuridine(34) in tRNA + S-adenosyl-L-homocysteine + H(+). Functionally, catalyzes carboxymethyl transfer from carboxy-S-adenosyl-L-methionine (Cx-SAM) to 5-hydroxyuridine (ho5U) to form 5-carboxymethoxyuridine (cmo5U) at position 34 in tRNAs. The chain is tRNA U34 carboxymethyltransferase from Idiomarina loihiensis (strain ATCC BAA-735 / DSM 15497 / L2-TR).